A 353-amino-acid chain; its full sequence is tRNA N6-adenosine threonylcarbamoyltransferase (353 aa).

The Fe cation site is built by His119 and His123. Substrate-binding positions include 145–149, Asp178, Gly191, and Asn285; that span reads LVSGG. Position 313 (Asp313) interacts with Fe cation.

This sequence belongs to the KAE1 / TsaD family. Fe(2+) serves as cofactor.

The protein resides in the cytoplasm. It carries out the reaction L-threonylcarbamoyladenylate + adenosine(37) in tRNA = N(6)-L-threonylcarbamoyladenosine(37) in tRNA + AMP + H(+). Its function is as follows. Required for the formation of a threonylcarbamoyl group on adenosine at position 37 (t(6)A37) in tRNAs that read codons beginning with adenine. Is involved in the transfer of the threonylcarbamoyl moiety of threonylcarbamoyl-AMP (TC-AMP) to the N6 group of A37, together with TsaE and TsaB. TsaD likely plays a direct catalytic role in this reaction. The sequence is that of tRNA N6-adenosine threonylcarbamoyltransferase from Magnetococcus marinus (strain ATCC BAA-1437 / JCM 17883 / MC-1).